A 311-amino-acid polypeptide reads, in one-letter code: Pyrimidine-specific ribonucleoside hydrolase RihA (311 aa).

Residue His-240 is part of the active site.

This sequence belongs to the IUNH family. RihA subfamily.

In terms of biological role, hydrolyzes cytidine or uridine to ribose and cytosine or uracil, respectively. In Salmonella agona (strain SL483), this protein is Pyrimidine-specific ribonucleoside hydrolase RihA.